We begin with the raw amino-acid sequence, 466 residues long: MIPVIALVGRPNVGKSTLFNRLTNSRDALVADYPGLTRDRKYGEARLENRRFIVIDTGGISGEEEGIDSAMAGQSLLAIQEADIVLFIVDSRVGLNPADELIARHLRVHNKKTYVVANKIDGMDPDIALAPFYELGMGEVHPTTATHGRGVRSLMEDVLAEYPEIPEEEQQGEATGIKIAIVGRPNVGKSTLVNRLLGEDRVVVYDQPGTTRDSIYINYTRFDKPYTLIDTAGVRRRKNIDLAVEKFSIVKTMQAIADANVVILVMDASEGIVEQDLHLMGTAIEAGRALVIALNKWDGLDESHKYYVKNELERRLRFVDFANIHFISALHGTGVGNLYKSIEQAYQSATDRFSTNYLTRILQDAVREHQPPMINGRRIKLRYAHPGGHNPPVIIVHGNQTDDVPGHYVKYLEKTYRRVLDLHGTPIRIEFRTTDNPYEARKKSMTRQQFIQKRRKEERDRNNPRR.

2 EngA-type G domains span residues 3-166 and 177-350; these read PVIA…PEIP and IKIA…QSAT. GTP is bound by residues 9–16, 56–60, 118–121, 183–190, 230–234, and 295–298; these read GRPNVGKS, DTGGI, NKID, DTAGV, and NKWD. The KH-like domain occupies 351–435; sequence DRFSTNYLTR…PIRIEFRTTD (85 aa). The segment at 442 to 466 is disordered; it reads KKSMTRQQFIQKRRKEERDRNNPRR. The segment covering 455–466 has biased composition (basic and acidic residues); sequence RKEERDRNNPRR.

The protein belongs to the TRAFAC class TrmE-Era-EngA-EngB-Septin-like GTPase superfamily. EngA (Der) GTPase family. As to quaternary structure, associates with the 50S ribosomal subunit.

Its function is as follows. GTPase that plays an essential role in the late steps of ribosome biogenesis. The polypeptide is GTPase Der (Cellvibrio japonicus (strain Ueda107) (Pseudomonas fluorescens subsp. cellulosa)).